Here is a 507-residue protein sequence, read N- to C-terminus: ATP synthase subunit alpha, chloroplastic (507 aa).

170–177 (GDRQTGKT) lines the ATP pocket.

It belongs to the ATPase alpha/beta chains family. In terms of assembly, F-type ATPases have 2 components, CF(1) - the catalytic core - and CF(0) - the membrane proton channel. CF(1) has five subunits: alpha(3), beta(3), gamma(1), delta(1), epsilon(1). CF(0) has four main subunits: a, b, b' and c.

It is found in the plastid. The protein localises to the chloroplast thylakoid membrane. It carries out the reaction ATP + H2O + 4 H(+)(in) = ADP + phosphate + 5 H(+)(out). Its function is as follows. Produces ATP from ADP in the presence of a proton gradient across the membrane. The alpha chain is a regulatory subunit. This Pelargonium hortorum (Common geranium) protein is ATP synthase subunit alpha, chloroplastic.